Reading from the N-terminus, the 171-residue chain is Small ribosomal subunit protein bS16 (171 aa).

The tract at residues 114 to 171 (EGGPTTEAAKPKKKAATSGAKKAAKAAEPEAAASEAAEPEAAAAPAEGGEQAESSAES) is disordered. Positions 142 to 171 (PEAAASEAAEPEAAAAPAEGGEQAESSAES) are enriched in low complexity.

It belongs to the bacterial ribosomal protein bS16 family.

The sequence is that of Small ribosomal subunit protein bS16 from Mycolicibacterium paratuberculosis (strain ATCC BAA-968 / K-10) (Mycobacterium paratuberculosis).